The following is a 308-amino-acid chain: Apolipoprotein E (308 aa).

A signal peptide spans 1–18 (MKFLWAALVVTLLAGCQA). 8 tandem repeats follow at residues 75-96 (LLIE…KQVG), 97-118 (PIAQ…ARLE), 119-140 (SDME…AALG), 141-162 (QNTD…KRLL), 163-184 (RDAE…EAAE), 185-206 (RGVS…LQAI), 207-224 (PPSQ…QKVR), and 225-246 (GRLE…DQME). The interval 75 to 246 (LLIEETMKEV…RLDDVRDQME (172 aa)) is 8 X 22 AA approximate tandem repeats. The LDL and other lipoprotein receptors binding stretch occupies residues 153–163 (HLRKLRKRLLR). 157–160 (LRKR) contributes to the heparin binding site. The interval 205 to 281 (AIPPSQQLRE…SWFEPLVQDM (77 aa)) is lipid-binding and lipoprotein association. 220 to 227 (GQKVRGRL) contributes to the heparin binding site. Residues 257 to 308 (SQVRLQAEAFQTRLKSWFEPLVQDMQRQWASLVEKVQSSLGISPSTKPSKTK) form a homooligomerization region. A specificity for association with VLDL region spans residues 269 to 281 (RLKSWFEPLVQDM).

The protein belongs to the apolipoprotein A1/A4/E family. In terms of assembly, homotetramer. May interact with ABCA1; functionally associated with ABCA1 in the biogenesis of HDLs. May interact with APP/A4 amyloid-beta peptide; the interaction is extremely stable in vitro but its physiological significance is unclear. May interact with MAPT. May interact with MAP2. In the cerebrospinal fluid, interacts with secreted SORL1. Interacts with PMEL; this allows the loading of PMEL luminal fragment on ILVs to induce fibril nucleation. In terms of processing, APOE exists as multiple glycosylated and sialylated glycoforms within cells and in plasma. The extent of glycosylation and sialylation are tissue and context specific. Post-translationally, glycated in plasma VLDL. Phosphorylated by FAM20C in the extracellular medium.

It localises to the secreted. It is found in the extracellular space. The protein localises to the extracellular matrix. Its subcellular location is the extracellular vesicle. The protein resides in the endosome. It localises to the multivesicular body. Its function is as follows. APOE is an apolipoprotein, a protein associating with lipid particles, that mainly functions in lipoprotein-mediated lipid transport between organs via the plasma and interstitial fluids. APOE is a core component of plasma lipoproteins and is involved in their production, conversion and clearance. Apolipoproteins are amphipathic molecules that interact both with lipids of the lipoprotein particle core and the aqueous environment of the plasma. As such, APOE associates with chylomicrons, chylomicron remnants, very low density lipoproteins (VLDL) and intermediate density lipoproteins (IDL) but shows a preferential binding to high-density lipoproteins (HDL). It also binds a wide range of cellular receptors including the LDL receptor/LDLR and the very low-density lipoprotein receptor/VLDLR that mediate the cellular uptake of the APOE-containing lipoprotein particles. Finally, APOE also has a heparin-binding activity and binds heparan-sulfate proteoglycans on the surface of cells, a property that supports the capture and the receptor-mediated uptake of APOE-containing lipoproteins by cells. The protein is Apolipoprotein E (APOE) of Pteropus alecto (Black flying fox).